The primary structure comprises 435 residues: Exopolysaccharide production protein ExoQ (435 aa).

10 helical membrane passes run 11-31 (PGAN…VFAY), 35-55 (FGQV…LVDY), 65-85 (YLWI…SAAP), 117-137 (GMIA…TYHY), 156-176 (LGFY…VLGE), 178-198 (GLWM…LLTS), 203-223 (SVLT…ITAL), 230-250 (LLFI…IYAG), 325-345 (VVET…TAFF), and 361-381 (MVLF…IDIL).

It is found in the cell membrane. It functions in the pathway glycan metabolism; exopolysaccharide biosynthesis. In terms of biological role, involved in the production of exopolysaccharide. This is Exopolysaccharide production protein ExoQ (exoQ) from Rhizobium meliloti (strain 1021) (Ensifer meliloti).